A 593-amino-acid chain; its full sequence is V-type sodium ATPase catalytic subunit A (593 aa).

232–239 (GPFGAGKT) serves as a coordination point for ATP.

This sequence belongs to the ATPase alpha/beta chains family.

The catalysed reaction is 4 Na(+)(in) + ATP + H2O = 4 Na(+)(out) + ADP + phosphate + H(+). In terms of biological role, involved in ATP-driven sodium extrusion. In Enterococcus hirae (strain ATCC 9790 / DSM 20160 / JCM 8729 / LMG 6399 / NBRC 3181 / NCIMB 6459 / NCDO 1258 / NCTC 12367 / WDCM 00089 / R), this protein is V-type sodium ATPase catalytic subunit A (ntpA).